The following is a 214-amino-acid chain: ATP phosphoribosyltransferase (214 aa).

This sequence belongs to the ATP phosphoribosyltransferase family. Short subfamily. In terms of assembly, heteromultimer composed of HisG and HisZ subunits.

The protein localises to the cytoplasm. The catalysed reaction is 1-(5-phospho-beta-D-ribosyl)-ATP + diphosphate = 5-phospho-alpha-D-ribose 1-diphosphate + ATP. The protein operates within amino-acid biosynthesis; L-histidine biosynthesis; L-histidine from 5-phospho-alpha-D-ribose 1-diphosphate: step 1/9. Functionally, catalyzes the condensation of ATP and 5-phosphoribose 1-diphosphate to form N'-(5'-phosphoribosyl)-ATP (PR-ATP). Has a crucial role in the pathway because the rate of histidine biosynthesis seems to be controlled primarily by regulation of HisG enzymatic activity. This chain is ATP phosphoribosyltransferase, found in Lysinibacillus sphaericus (strain C3-41).